A 176-amino-acid polypeptide reads, in one-letter code: Macro domain-containing protein LMOf2365_2748 (176 aa).

The Macro domain maps to 1-175 (MEITVVKGDI…LYNKLINSEV (175 aa)).

This sequence belongs to the MacroD-type family.

The polypeptide is Macro domain-containing protein LMOf2365_2748 (Listeria monocytogenes serotype 4b (strain F2365)).